The chain runs to 210 residues: Regulator of G-protein signaling 17 (210 aa).

The segment at 1–21 is disordered; that stretch reads MRKRQQSQNEGTPAVSQAPGN. In terms of domain architecture, RGS spans 84 to 200; the sequence is NFDKMMKAPA…LNSQIYKSFV (117 aa). A Phosphotyrosine modification is found at Y137.

Interacts with GNAI1 and GNAQ. Interacts with GNAZ and GNAI2. Interacts with OPRM1. Forms a complex with mu-opioid receptors and G(alpha)z/i2 subunits, including GNAZ and GNAI2; the formation of this complex results in mu-opioid receptor desensitization. Interacts with HINT1. N- and O-glycosylated in synapsomal membranes. In terms of processing, serine phosphorylated in synapsomal membranes. Post-translationally, sumoylated with SUMO1 and SUM02 in synaptosomes. The sumoylated forms act as a scaffold for sequestering mu-opioid receptor-activated G(alpha) subunits. Desumoylated by HINT1. Predominantly expressed in the cerebellum. Also expressed in the cortex and medulla. Weakly expressed in a number of peripheral tissues notably spleen, lung and leukocytes.

Its subcellular location is the membrane. It is found in the synapse. It localises to the synaptosome. The protein resides in the nucleus. The protein localises to the cytoplasm. Regulates G protein-coupled receptor signaling cascades, including signaling via muscarinic acetylcholine receptor CHRM2 and dopamine receptor DRD2. Inhibits signal transduction by increasing the GTPase activity of G protein alpha subunits, thereby driving them into their inactive GDP-bound form. Binds selectively to GNAZ and GNAI2 subunits, accelerates their GTPase activity and regulates their signaling activities. Negatively regulates mu-opioid receptor-mediated activation of the G-proteins. The sequence is that of Regulator of G-protein signaling 17 (RGS17) from Homo sapiens (Human).